The chain runs to 119 residues: Ribonuclease P protein component (119 aa).

The protein belongs to the RnpA family. In terms of assembly, consists of a catalytic RNA component (M1 or rnpB) and a protein subunit.

The catalysed reaction is Endonucleolytic cleavage of RNA, removing 5'-extranucleotides from tRNA precursor.. RNaseP catalyzes the removal of the 5'-leader sequence from pre-tRNA to produce the mature 5'-terminus. It can also cleave other RNA substrates such as 4.5S RNA. The protein component plays an auxiliary but essential role in vivo by binding to the 5'-leader sequence and broadening the substrate specificity of the ribozyme. The sequence is that of Ribonuclease P protein component from Pectobacterium atrosepticum (strain SCRI 1043 / ATCC BAA-672) (Erwinia carotovora subsp. atroseptica).